Consider the following 46-residue polypeptide: Protein PsbN (46 aa).

A helical membrane pass occupies residues 7–27 (ALSVAIGVLAVLLGMTGFGVY).

It belongs to the PsbN family.

It is found in the cellular thylakoid membrane. Its function is as follows. May play a role in photosystem I and II biogenesis. The protein is Protein PsbN of Parasynechococcus marenigrum (strain WH8102).